The following is a 209-amino-acid chain: Potassium-transporting ATPase KdpC subunit (209 aa).

A helical membrane pass occupies residues 10 to 30 (VISLVFLFVLGFLFPTVTSLI).

This sequence belongs to the KdpC family. The system is composed of three essential subunits: KdpA, KdpB and KdpC.

It is found in the cell membrane. In terms of biological role, part of the high-affinity ATP-driven potassium transport (or Kdp) system, which catalyzes the hydrolysis of ATP coupled with the electrogenic transport of potassium into the cytoplasm. This subunit acts as a catalytic chaperone that increases the ATP-binding affinity of the ATP-hydrolyzing subunit KdpB by the formation of a transient KdpB/KdpC/ATP ternary complex. This chain is Potassium-transporting ATPase KdpC subunit, found in Thermoplasma volcanium (strain ATCC 51530 / DSM 4299 / JCM 9571 / NBRC 15438 / GSS1).